A 500-amino-acid polypeptide reads, in one-letter code: Glycerol kinase (500 aa).

Threonine 12 serves as a coordination point for ADP. Threonine 12, threonine 13, and serine 14 together coordinate ATP. Residue threonine 12 participates in sn-glycerol 3-phosphate binding. Residue arginine 16 participates in ADP binding. The sn-glycerol 3-phosphate site is built by arginine 82, glutamate 83, tyrosine 134, and aspartate 246. Positions 82, 83, 134, 246, and 247 each coordinate glycerol. ADP is bound by residues threonine 268 and glycine 312. The ATP site is built by threonine 268, glycine 312, glutamine 316, and glycine 413. Glycine 413 and asparagine 417 together coordinate ADP.

It belongs to the FGGY kinase family.

It catalyses the reaction glycerol + ATP = sn-glycerol 3-phosphate + ADP + H(+). The protein operates within polyol metabolism; glycerol degradation via glycerol kinase pathway; sn-glycerol 3-phosphate from glycerol: step 1/1. Inhibited by fructose 1,6-bisphosphate (FBP). Functionally, key enzyme in the regulation of glycerol uptake and metabolism. Catalyzes the phosphorylation of glycerol to yield sn-glycerol 3-phosphate. The polypeptide is Glycerol kinase (Saccharopolyspora erythraea (strain ATCC 11635 / DSM 40517 / JCM 4748 / NBRC 13426 / NCIMB 8594 / NRRL 2338)).